Here is a 311-residue protein sequence, read N- to C-terminus: Methionyl-tRNA formyltransferase (311 aa).

(6S)-5,6,7,8-tetrahydrofolate is bound at residue 110 to 113; the sequence is SLLP.

This sequence belongs to the Fmt family.

It catalyses the reaction L-methionyl-tRNA(fMet) + (6R)-10-formyltetrahydrofolate = N-formyl-L-methionyl-tRNA(fMet) + (6S)-5,6,7,8-tetrahydrofolate + H(+). In terms of biological role, attaches a formyl group to the free amino group of methionyl-tRNA(fMet). The formyl group appears to play a dual role in the initiator identity of N-formylmethionyl-tRNA by promoting its recognition by IF2 and preventing the misappropriation of this tRNA by the elongation apparatus. The chain is Methionyl-tRNA formyltransferase from Streptococcus agalactiae serotype Ia (strain ATCC 27591 / A909 / CDC SS700).